The primary structure comprises 335 residues: Lipoyl synthase (335 aa).

7 residues coordinate [4Fe-4S] cluster: cysteine 55, cysteine 60, cysteine 66, cysteine 81, cysteine 85, cysteine 88, and serine 292. Residues tryptophan 67–leucine 281 form the Radical SAM core domain.

The protein belongs to the radical SAM superfamily. Lipoyl synthase family. Requires [4Fe-4S] cluster as cofactor.

The protein resides in the cytoplasm. It carries out the reaction [[Fe-S] cluster scaffold protein carrying a second [4Fe-4S](2+) cluster] + N(6)-octanoyl-L-lysyl-[protein] + 2 oxidized [2Fe-2S]-[ferredoxin] + 2 S-adenosyl-L-methionine + 4 H(+) = [[Fe-S] cluster scaffold protein] + N(6)-[(R)-dihydrolipoyl]-L-lysyl-[protein] + 4 Fe(3+) + 2 hydrogen sulfide + 2 5'-deoxyadenosine + 2 L-methionine + 2 reduced [2Fe-2S]-[ferredoxin]. It participates in protein modification; protein lipoylation via endogenous pathway; protein N(6)-(lipoyl)lysine from octanoyl-[acyl-carrier-protein]: step 2/2. Catalyzes the radical-mediated insertion of two sulfur atoms into the C-6 and C-8 positions of the octanoyl moiety bound to the lipoyl domains of lipoate-dependent enzymes, thereby converting the octanoylated domains into lipoylated derivatives. The sequence is that of Lipoyl synthase from Kocuria rhizophila (strain ATCC 9341 / DSM 348 / NBRC 103217 / DC2201).